The chain runs to 406 residues: Endoplasmic reticulum resident protein 44 (406 aa).

The first 29 residues, 1–29, serve as a signal peptide directing secretion; that stretch reads MHPAVFLSLPDLRCSLLLLVTWVFTPVTT. In terms of domain architecture, Thioredoxin spans 30-138; it reads EITSLDTENI…VKALADYIRQ (109 aa). 2 cysteine pairs are disulfide-bonded: Cys-189/Cys-241 and Cys-301/Cys-318. Residues 236–285 are interaction with ITPR1; it reads WIQDKCVPLVREITFENGEELTEEGLPFLILFHMKEDTESLEIFQNEVAR. The tract at residues 360–387 is disordered; the sequence is FHHGPDPTDTAPGEQAQDVASSPPESSF. The segment covering 377–387 has biased composition (polar residues); sequence DVASSPPESSF. A Prevents secretion from ER motif is present at residues 403–406; sequence RDEL.

In terms of assembly, forms mixed disulfides with both ERO1A and ERO1B and cargo folding intermediates; the interactions with ERO1A and ERO1B result in their retention in the endoplasmic reticulum. Directly interacts with ITPR1 in a pH-, redox state- and calcium-dependent manner, but not with ITPR2 or ITPR3. The strength of this interaction inversely correlates with calcium concentration.

The protein resides in the endoplasmic reticulum lumen. Functionally, mediates thiol-dependent retention in the early secretory pathway, forming mixed disulfides with substrate proteins through its conserved CRFS motif. Inhibits the calcium channel activity of ITPR1. May have a role in the control of oxidative protein folding in the endoplasmic reticulum. Required to retain ERO1A and ERO1B in the endoplasmic reticulum. This Homo sapiens (Human) protein is Endoplasmic reticulum resident protein 44 (ERP44).